Consider the following 284-residue polypeptide: Cell division protein FtsQ (284 aa).

At 1-31 (MAQLPASMRRKRAAITSIHDKPPTRKQKLAN) the chain is on the cytoplasmic side. A helical membrane pass occupies residues 32 to 52 (AGGWVLLVIAFVVLAVGIYGL). The Periplasmic portion of the chain corresponds to 53–284 (YKVITDATVA…SIAGGTKAKP (232 aa)). In terms of domain architecture, POTRA spans 59-128 (ATVAKLEVVG…NGIRVRVMPR (70 aa)).

It belongs to the FtsQ/DivIB family. FtsQ subfamily. Part of a complex composed of FtsB, FtsL and FtsQ.

The protein localises to the cell inner membrane. Its function is as follows. Essential cell division protein. May link together the upstream cell division proteins, which are predominantly cytoplasmic, with the downstream cell division proteins, which are predominantly periplasmic. May control correct divisome assembly. The sequence is that of Cell division protein FtsQ from Acinetobacter oleivorans (strain JCM 16667 / KCTC 23045 / DR1).